The sequence spans 425 residues: Enolase (425 aa).

Glutamine 163 serves as a coordination point for (2R)-2-phosphoglycerate. Catalysis depends on glutamate 205, which acts as the Proton donor. The Mg(2+) site is built by aspartate 242, glutamate 285, and aspartate 312. Lysine 337, arginine 366, serine 367, and lysine 388 together coordinate (2R)-2-phosphoglycerate. Lysine 337 (proton acceptor) is an active-site residue.

It belongs to the enolase family. The cofactor is Mg(2+).

It is found in the cytoplasm. The protein localises to the secreted. The protein resides in the cell surface. It carries out the reaction (2R)-2-phosphoglycerate = phosphoenolpyruvate + H2O. It participates in carbohydrate degradation; glycolysis; pyruvate from D-glyceraldehyde 3-phosphate: step 4/5. Its function is as follows. Catalyzes the reversible conversion of 2-phosphoglycerate (2-PG) into phosphoenolpyruvate (PEP). It is essential for the degradation of carbohydrates via glycolysis. The polypeptide is Enolase (Syntrophomonas wolfei subsp. wolfei (strain DSM 2245B / Goettingen)).